Reading from the N-terminus, the 497-residue chain is Acetyltransferase FGR3 (497 aa).

Ca(2+) is bound by residues aspartate 221 and isoleucine 224. CoA contacts are provided by lysine 255 and aspartate 303. Aspartate 386 contributes to the Ca(2+) binding site. A CoA-binding site is contributed by threonine 396. Residue aspartate 462 participates in Ca(2+) binding. The tract at residues 477–497 is disordered; the sequence is DASEAKKANGTNGTNGVNGSS. Low complexity predominate over residues 485-497; the sequence is NGTNGTNGVNGSS.

This sequence belongs to the trichothecene 3-O-acetyltransferase family.

The protein operates within secondary metabolite biosynthesis. In terms of biological role, acetyltransferase; part of the gene cluster that mediates the biosynthesis of the tetraketides fugralins such as linear fugralin A and cyclic fugralin B, volatile compounds that play a role in the asexual reproductive cycle but are not involved in pathogenicity. One of the key features of fugralins is the presence of a double methyl group, which is only rarely encountered in fungal secondary metabolites. As the fugralins cluster does not contain an independent methyltransferase, the PKS FGR1 is probably responsible for adding two methyl groups to the same carbon atom. Fugralin B is similar to fugralin A except for a cyclization between the carboxylic acid C-8 and the alcohol on C-4 resulting in a six membered lactone ring, probably catalyzed by the cyclase FGR4. The exact role of the individual cluster genes remains unknown and further work is needed to unravel the biosynthetic pathway. The chain is Acetyltransferase FGR3 from Gibberella zeae (strain ATCC MYA-4620 / CBS 123657 / FGSC 9075 / NRRL 31084 / PH-1) (Wheat head blight fungus).